Here is a 140-residue protein sequence, read N- to C-terminus: Large ribosomal subunit protein mL43 (140 aa).

The protein belongs to the mitochondrion-specific ribosomal protein mL43 family. As to quaternary structure, component of the mitochondrial large ribosomal subunit (mt-LSU). Mature yeast 74S mitochondrial ribosomes consist of a small (37S) and a large (54S) subunit. The 37S small subunit contains a 15S ribosomal RNA (15S mt-rRNA) and 34 different proteins. The 54S large subunit contains a 21S rRNA (21S mt-rRNA) and 46 different proteins.

The protein resides in the mitochondrion. Functionally, component of the mitochondrial ribosome (mitoribosome), a dedicated translation machinery responsible for the synthesis of mitochondrial genome-encoded proteins, including at least some of the essential transmembrane subunits of the mitochondrial respiratory chain. The mitoribosomes are attached to the mitochondrial inner membrane and translation products are cotranslationally integrated into the membrane. Also has an extraribosomal function, being essential for mitochondrial genome integrity. May interact with MHR1 to take part in the mtDNA repair mechanism. This chain is Large ribosomal subunit protein mL43 (MRPL51), found in Saccharomyces cerevisiae (strain ATCC 204508 / S288c) (Baker's yeast).